A 728-amino-acid chain; its full sequence is Pre-mRNA-splicing ATP-dependent RNA helicase prp-28 (728 aa).

A disordered region spans residues 19-155; sequence KKEEEAAAAK…NDEAELRARY (137 aa). 3 stretches are compositionally biased toward basic and acidic residues: residues 33-59, 109-125, and 137-153; these read PKKERERLEAEKKAKEEEERKRKEEAK, RDYRDNRDNRDNRDRNQ, and EEKRAKMERNDEAELRA. Residues 293 to 321 carry the Q motif motif; that stretch reads RSWEESTLPRRLLDIVKNVGYDEPTPIQR. One can recognise a Helicase ATP-binding domain in the interval 324–527; that stretch reads IPIALQARDL…KKYLRRPAIV (204 aa). An ATP-binding site is contributed by 337–344; the sequence is AVTGSGKT. A DEAD box motif is present at residues 450-453; it reads DEAD. Residues 538 to 701 form the Helicase C-terminal domain; it reads TVEQRVEFVS…KVPDELRRHE (164 aa). Residues 692–728 are disordered; that stretch reads KVPDELRRHEAAQNKPQKGQKKLEESNGYSGKGGSWN. Over residues 693 to 703 the composition is skewed to basic and acidic residues; sequence VPDELRRHEAA.

This sequence belongs to the DEAD box helicase family. DDX23/PRP28 subfamily. In terms of assembly, component of the U5 snRNP complex.

It localises to the cytoplasm. The protein resides in the nucleus. The catalysed reaction is ATP + H2O = ADP + phosphate + H(+). ATP-dependent RNA helicase involved in mRNA splicing. May destabilize the U1/5'-splice site duplex to permit an effective competition for the 5'-splice site by the U6 snRNA, resulting in the switch between U1 and U6 at the 5'-splice site. May also act to unwind the U4/U6 base-pairing interaction in the U4/U6/U5 snRNP, facilitating the first covalent step of splicing. The chain is Pre-mRNA-splicing ATP-dependent RNA helicase prp-28 (prp-28) from Neurospora crassa (strain ATCC 24698 / 74-OR23-1A / CBS 708.71 / DSM 1257 / FGSC 987).